Reading from the N-terminus, the 272-residue chain is Bis(5'-nucleosyl)-tetraphosphatase, symmetrical (272 aa).

This sequence belongs to the Ap4A hydrolase family.

It carries out the reaction P(1),P(4)-bis(5'-adenosyl) tetraphosphate + H2O = 2 ADP + 2 H(+). In terms of biological role, hydrolyzes diadenosine 5',5'''-P1,P4-tetraphosphate to yield ADP. This Chromohalobacter salexigens (strain ATCC BAA-138 / DSM 3043 / CIP 106854 / NCIMB 13768 / 1H11) protein is Bis(5'-nucleosyl)-tetraphosphatase, symmetrical.